Consider the following 361-residue polypeptide: Molybdenum import ATP-binding protein ModC (361 aa).

One can recognise an ABC transporter domain in the interval 1–228 (MLTINIEKQL…EQMRPWVPLQ (228 aa)). Residue 31–38 (GRSGAGKT) coordinates ATP. In terms of domain architecture, Mop spans 289–356 (RSSIRNVLKG…IKGVTMTQMD (68 aa)).

The protein belongs to the ABC transporter superfamily. Molybdate importer (TC 3.A.1.8) family. As to quaternary structure, the complex is composed of two ATP-binding proteins (ModC), two transmembrane proteins (ModB) and a solute-binding protein (ModA).

The protein localises to the cell inner membrane. The enzyme catalyses molybdate(out) + ATP + H2O = molybdate(in) + ADP + phosphate + H(+). Functionally, part of the ABC transporter complex ModABC involved in molybdenum import. Responsible for energy coupling to the transport system. The polypeptide is Molybdenum import ATP-binding protein ModC (Shewanella oneidensis (strain ATCC 700550 / JCM 31522 / CIP 106686 / LMG 19005 / NCIMB 14063 / MR-1)).